A 176-amino-acid polypeptide reads, in one-letter code: NAD(P)H-quinone oxidoreductase subunit 6, chloroplastic (176 aa).

5 consecutive transmembrane segments (helical) span residues 10-30 (ILLV…ILLT), 32-52 (TIYS…FYIL), 61-81 (AQLL…VMFM), 92-112 (IWTV…FSLI), and 152-172 (FILP…GAIA).

This sequence belongs to the complex I subunit 6 family. As to quaternary structure, NDH is composed of at least 16 different subunits, 5 of which are encoded in the nucleus.

The protein resides in the plastid. Its subcellular location is the chloroplast thylakoid membrane. It carries out the reaction a plastoquinone + NADH + (n+1) H(+)(in) = a plastoquinol + NAD(+) + n H(+)(out). It catalyses the reaction a plastoquinone + NADPH + (n+1) H(+)(in) = a plastoquinol + NADP(+) + n H(+)(out). Functionally, NDH shuttles electrons from NAD(P)H:plastoquinone, via FMN and iron-sulfur (Fe-S) centers, to quinones in the photosynthetic chain and possibly in a chloroplast respiratory chain. The immediate electron acceptor for the enzyme in this species is believed to be plastoquinone. Couples the redox reaction to proton translocation, and thus conserves the redox energy in a proton gradient. In Piper cenocladum (Ant piper), this protein is NAD(P)H-quinone oxidoreductase subunit 6, chloroplastic (ndhG).